Here is a 517-residue protein sequence, read N- to C-terminus: uncharacterized protein (517 aa).

10 consecutive transmembrane segments (helical) span residues Phe35 to Ile55, Ile81 to Asn101, Ile102 to Val122, Ile135 to Leu155, Val164 to Thr184, Leu223 to Gly243, Phe268 to Ala288, Phe302 to Leu322, Ile328 to Asn348, and Ala352 to Ile372.

It is found in the cell membrane. This is an uncharacterized protein from Mycoplasma pneumoniae (strain ATCC 29342 / M129 / Subtype 1) (Mycoplasmoides pneumoniae).